Reading from the N-terminus, the 430-residue chain is Maltoporin (430 aa).

An N-terminal signal peptide occupies residues 1–23 (MNNKKTLLAVAISGMMFATSAAA).

The protein belongs to the porin LamB (TC 1.B.3) family. Homotrimer formed of three 18-stranded antiparallel beta-barrels, containing three independent channels.

Its subcellular location is the cell outer membrane. It carries out the reaction beta-maltose(in) = beta-maltose(out). Its function is as follows. Involved in the transport of maltose and maltodextrins. In Actinobacillus succinogenes (strain ATCC 55618 / DSM 22257 / CCUG 43843 / 130Z), this protein is Maltoporin.